Here is an 815-residue protein sequence, read N- to C-terminus: Probable receptor-like protein kinase At2g39360 (815 aa).

The signal sequence occupies residues 1–26 (MINLKLFLELKLCFLITLLCSSHISS). The Extracellular segment spans residues 27 to 407 (VSDTFFINCG…SSSNKSSNTS (381 aa)). Asn40, Asn45, Asn125, Asn146, Asn209, Asn244, Asn277, Asn331, Asn355, Asn401, and Asn405 each carry an N-linked (GlcNAc...) asparagine glycan. Residues 408–428 (VGLIAGLSAALCVALVFGVVV) traverse the membrane as a helical segment. The Cytoplasmic segment spans residues 429–815 (SWWCIRKRRR…FAQMVREETR (387 aa)). A Protein kinase domain is found at 487–761 (FDESLVIGVG…GDLLWNLEFM (275 aa)). Residues 493-501 (IGVGGFGKV) and Lys515 contribute to the ATP site. The active-site Proton acceptor is the Asp612.

This sequence belongs to the protein kinase superfamily. Ser/Thr protein kinase family.

It localises to the cell membrane. In Arabidopsis thaliana (Mouse-ear cress), this protein is Probable receptor-like protein kinase At2g39360.